A 70-amino-acid polypeptide reads, in one-letter code: Large ribosomal subunit protein eL43 (70 aa).

Zn(2+) is bound by residues C36, C39, C55, and C58. The C4-type zinc-finger motif lies at 36–58 (CPYCKTTGKVIRLASGIWYCKKC).

This sequence belongs to the eukaryotic ribosomal protein eL43 family. Putative zinc-binding subfamily. In terms of assembly, part of the 50S ribosomal subunit. Zn(2+) is required as a cofactor.

Functionally, binds to the 23S rRNA. In Saccharolobus solfataricus (strain ATCC 35092 / DSM 1617 / JCM 11322 / P2) (Sulfolobus solfataricus), this protein is Large ribosomal subunit protein eL43.